We begin with the raw amino-acid sequence, 330 residues long: Interleukin-12 subunit beta (330 aa).

Residues 1–22 form the signal peptide; that stretch reads MHPQQLVVSWFSLVLLASPIMA. Positions 23–106 constitute an Ig-like C2-type domain; the sequence is IWELEKNVYV…LSHSLLLLHK (84 aa). A disulfide bridge links cysteine 50 with cysteine 90. Asparagine 136 and asparagine 224 each carry an N-linked (GlcNAc...) asparagine glycan. In terms of domain architecture, Fibronectin type-III spans 239 to 330; the sequence is PPKNLQLKPL…WSEWASVSCS (92 aa).

It belongs to the IL-12B family. As to quaternary structure, heterodimer with IL12A; disulfide-linked. The heterodimer is known as interleukin IL-12. Heterodimer with IL23A; disulfide-linked. The heterodimer is known as interleukin IL-23. Also secreted as a monomer. Interacts with NBR1; this interaction promotes IL-12 secretion.

It is found in the secreted. Functionally, cytokine that can act as a growth factor for activated T and NK cells, enhance the lytic activity of NK/lymphokine-activated killer cells, and stimulate the production of IFN-gamma by resting PBMC. In terms of biological role, associates with IL23A to form the IL-23 interleukin, a heterodimeric cytokine which functions in innate and adaptive immunity. IL-23 may constitute with IL-17 an acute response to infection in peripheral tissues. IL-23 binds to a heterodimeric receptor complex composed of IL12RB1 and IL23R, activates the Jak-Stat signaling cascade, stimulates memory rather than naive T-cells and promotes production of pro-inflammatory cytokines. IL-23 induces autoimmune inflammation and thus may be responsible for autoimmune inflammatory diseases and may be important for tumorigenesis. The polypeptide is Interleukin-12 subunit beta (IL12B) (Lama glama (Llama)).